The chain runs to 272 residues: Putative esterase/lipase 3 (272 aa).

His34 is an active-site residue. Ser100 functions as the Charge relay system in the catalytic mechanism.

It belongs to the lipase/esterase LIP3/BchO family.

The sequence is that of Putative esterase/lipase 3 from Mycoplasma pneumoniae (strain ATCC 29342 / M129 / Subtype 1) (Mycoplasmoides pneumoniae).